The sequence spans 464 residues: Methionine aminopeptidase 2-2 (464 aa).

The disordered stretch occupies residues 1-106 (MGAKTYEGGD…PRVPLSQLFP (106 aa)). The segment covering 37-53 (EDGDGEFGSDDDDDGGD) has biased composition (acidic residues). The segment covering 70–86 (PKKKKRSKKKKNNKKKS) has biased composition (basic residues). Substrate is bound at residue H216. Positions 237, 248, and 317 each coordinate a divalent metal cation. Position 325 (H325) interacts with substrate. Residues E350 and E445 each contribute to the a divalent metal cation site.

It belongs to the peptidase M24A family. Methionine aminopeptidase eukaryotic type 2 subfamily. Co(2+) is required as a cofactor. Zn(2+) serves as cofactor. The cofactor is Mn(2+). It depends on Fe(2+) as a cofactor.

The protein localises to the cytoplasm. It carries out the reaction Release of N-terminal amino acids, preferentially methionine, from peptides and arylamides.. Cotranslationally removes the N-terminal methionine from nascent proteins. The N-terminal methionine is often cleaved when the second residue in the primary sequence is small and uncharged (Met-Ala-, Cys, Gly, Pro, Ser, Thr, or Val). The sequence is that of Methionine aminopeptidase 2-2 from Talaromyces stipitatus (strain ATCC 10500 / CBS 375.48 / QM 6759 / NRRL 1006) (Penicillium stipitatum).